Consider the following 158-residue polypeptide: Putative pre-16S rRNA nuclease (158 aa).

Residues 138–158 (ELKPAQQTASRSGAGAGDGGS) are disordered.

Belongs to the YqgF nuclease family.

Its subcellular location is the cytoplasm. Its function is as follows. Could be a nuclease involved in processing of the 5'-end of pre-16S rRNA. This Synechococcus sp. (strain CC9605) protein is Putative pre-16S rRNA nuclease.